The primary structure comprises 299 residues: GTPase Era (299 aa).

Residues 5 to 175 (RSGFVCFVGR…TDVLAGKLPP (171 aa)) enclose the Era-type G domain. The G1 stretch occupies residues 13–20 (GRPNTGKS). 13–20 (GRPNTGKS) lines the GTP pocket. The segment at 39–43 (QTTRH) is G2. The G3 stretch occupies residues 60–63 (DTPG). Residues 60 to 64 (DTPGL) and 124 to 127 (TKID) each bind GTP. The interval 124–127 (TKID) is G4. Residues 154–156 (VSA) form a G5 region. Residues 206–285 (VRDELPHSLA…YLDLRVKIAK (80 aa)) enclose the KH type-2 domain.

It belongs to the TRAFAC class TrmE-Era-EngA-EngB-Septin-like GTPase superfamily. Era GTPase family. Monomer.

It localises to the cell envelope. The protein localises to the secreted. It is found in the cell wall. In terms of biological role, exhibits GTPase activity. Binds RNA but is probably not involved in ribosome assembly in mycobacteria. The protein is GTPase Era of Mycobacterium sp. (strain JLS).